Reading from the N-terminus, the 475-residue chain is Crocetin glucosyltransferase 3 (475 aa).

The active-site Proton acceptor is histidine 16. Histidine 16 provides a ligand contact to an anthocyanidin. Catalysis depends on aspartate 123, which acts as the Charge relay. UDP-alpha-D-glucose is bound by residues threonine 144, alanine 354, glutamine 356, histidine 371, tryptophan 374, asparagine 375, serine 376, and glutamate 379. Alanine 394 serves as a coordination point for an anthocyanidin. Residues glutamate 395 and glutamine 396 each contribute to the UDP-alpha-D-glucose site.

It belongs to the UDP-glycosyltransferase family. In terms of tissue distribution, mainly expressed in stamens.

It carries out the reaction crocetin + UDP-alpha-D-glucose = beta-D-glucosyl crocetin + UDP. The catalysed reaction is beta-D-glucosyl crocetin + UDP-alpha-D-glucose = bis(beta-D-glucosyl) crocetin + UDP. It catalyses the reaction beta-D-gentiobiosyl crocetin + UDP-alpha-D-glucose = beta-D-gentiobiosyl beta-D-glucosyl crocetin + UDP. Functionally, crocetin glucosyltransferase involved in the synthesis of crocin, one of the apocarotenoids responsible for the color and bitter taste of saffron. The protein is Crocetin glucosyltransferase 3 (GLT3) of Crocus sativus (Saffron).